The chain runs to 234 residues: MLRYPYFCRMYKECLSCWLESGIPNLGVWPKRIHTTAEKYREYEAREQTDQTQVQELHRSQDRDFETMAKLHIPVMVDEVVHCLSPQKGQIFLDMTFGSGGHTKAILQKESDIVLYALDRDPTAYALAEHLSELYPKQIRAMLGQFSQAEALLMKAGVQPGTFDGVLMDLGCSSMQLDTPERGSSLRKDGPLDIRMDGGRNISSLCYLYTERLTTAIYLYCHQDFPGSSHICEQ.

Residues 100-102, aspartate 119, phenylalanine 146, aspartate 169, and glutamine 176 each bind S-adenosyl-L-methionine; that span reads GGH.

It belongs to the methyltransferase superfamily. RsmH family.

Its function is as follows. Probable S-adenosyl-L-methionine-dependent methyltransferase. This is Putative methyltransferase-like protein 15P1 (METTL15P1) from Homo sapiens (Human).